A 180-amino-acid polypeptide reads, in one-letter code: Ribosome-recycling factor (180 aa).

The protein belongs to the RRF family.

It is found in the cytoplasm. Functionally, responsible for the release of ribosomes from messenger RNA at the termination of protein biosynthesis. May increase the efficiency of translation by recycling ribosomes from one round of translation to another. This is Ribosome-recycling factor from Chlamydia felis (strain Fe/C-56) (Chlamydophila felis).